The chain runs to 282 residues: sn-glycerol-3-phosphate transport system permease protein UgpE (282 aa).

The next 6 helical transmembrane spans lie at 14 to 34, 86 to 106, 112 to 132, 146 to 168, 201 to 221, and 248 to 268; these read LILI…FVAS, MAIA…IVFF, MFFF…RILP, YAGL…QFFL, IAAL…WPLL, and WNYV…VVVL. Residues 78–269 enclose the ABC transmembrane type-1 domain; sequence LWNSFVVAMA…IPPILVVVLM (192 aa).

The protein belongs to the binding-protein-dependent transport system permease family. As to quaternary structure, the complex is composed of two ATP-binding proteins (UgpC), two transmembrane proteins (UgpA and UgpE) and a solute-binding protein (UgpB).

It is found in the cell inner membrane. In terms of biological role, part of the ABC transporter complex UgpBAEC involved in sn-glycerol-3-phosphate (G3P) import. Probably responsible for the translocation of the substrate across the membrane. The polypeptide is sn-glycerol-3-phosphate transport system permease protein UgpE (ugpE) (Brucella suis biovar 1 (strain 1330)).